The sequence spans 711 residues: K(+)-insensitive pyrophosphate-energized proton pump (711 aa).

5 helical membrane passes run 7–27 (LIYG…KFIF), 58–78 (IASL…YGHL), 85–105 (ALSF…CSAL), 145–165 (LAVT…YGGL), and 179–199 (IVGF…GGGI). K202 provides a ligand contact to substrate. Residues D205, D209, and D235 each coordinate Mg(2+). The next 6 membrane-spanning stretches (helical) occupy residues 251-271 (TAAE…IFGW), 274-294 (ILFP…GIFF), 311-331 (GYFV…KVML), 343-363 (YLLL…FVFL), 403-423 (LPVI…EMAI), and 431-451 (LYGT…ILAM). Residue D459 participates in Mg(2+) binding. The next 4 membrane-spanning stretches (helical) occupy residues 495 to 515 (YAIG…LDEV), 535 to 555 (EVFI…STAI), 602 to 622 (EMVI…VILG), and 624 to 644 (EAAA…ALYL). Ca(2+)-binding residues include D652, D678, and D682. K685 lines the substrate pocket. The chain crosses the membrane as a helical span at residues 690–710 (PSLHVLIKLISTITLVFVALF).

It belongs to the H(+)-translocating pyrophosphatase (TC 3.A.10) family. K(+)-insensitive subfamily. Homodimer. It depends on Mg(2+) as a cofactor.

It is found in the cell membrane. The catalysed reaction is diphosphate + H2O + H(+)(in) = 2 phosphate + 2 H(+)(out). Proton pump that utilizes the energy of pyrophosphate hydrolysis as the driving force for proton movement across the membrane. Generates a proton motive force. The polypeptide is K(+)-insensitive pyrophosphate-energized proton pump (Caldanaerobacter subterraneus subsp. tengcongensis (strain DSM 15242 / JCM 11007 / NBRC 100824 / MB4) (Thermoanaerobacter tengcongensis)).